The primary structure comprises 391 residues: Recombination and repair protein (391 aa).

ATP is bound at residue 60-67 (GPSKSFKS). Residues 364 to 374 (KSPESKSKSAA) are compositionally biased toward basic and acidic residues. The tract at residues 364–391 (KSPESKSKSAADLETDLEQLSDMEEFNE) is disordered. A compositionally biased stretch (acidic residues) spans 376-391 (LETDLEQLSDMEEFNE).

This sequence belongs to the RecA family.

Its function is as follows. Important in genetic recombination, DNA repair, and replication. Possesses pairing and strand-transfer activity. Interacts with dda and gene 32 proteins. This is Recombination and repair protein (UVSX) from Enterobacteria phage T4 (Bacteriophage T4).